The sequence spans 517 residues: MAVSRRRGPQAGAQSFFCALLLSFSQFVGSDGMGGDAAAPGAAGTQAELPHRRFEYKYSFKGPHLVQSDGTVPFWAHAGNAIPSADQIRIAPSLKSQRGSVWTKTKAAFENWEVEVTFRVTGRGRIGADGLAIWYTENQGLDGPVFGSADMWNGVGIFFDSFDNDGKKNNPAIVVVGNNGQINYDHQNDGATQALASCQRDFRNKPYPVRAKITYYQKTLTVMINNGFTPDKNDYEFCAKVENMVIPTQGHFGISAATGGLADDHDVLSFLTFQLTEPGKEPPTPEKDISEKEKEKYQEEFEHFQQELDKKKEEFQKGHPDLQGQPADDIFESIGDRELRQVFEGQNRIHLEIKQLNRQLDMILDEQRRYVSSLTEEISRRGAGTPGQPGQVSQQELDTVVRTQLEILRQVNEMKNSMRETMRLVSGVQHPGSAGVYETTQHFMDIKEHLHIVKRDIDSLAQRSMSSNEKPKCPDLPAFPSCLSTVHFVIFIVVQTVLFIGYIMYRTQQEAAAKKFF.

The signal sequence occupies residues 1–30 (MAVSRRRGPQAGAQSFFCALLLSFSQFVGS). Topologically, residues 31 to 484 (DGMGGDAAAP…DLPAFPSCLS (454 aa)) are lumenal. Residues 52–275 (RRFEYKYSFK…DVLSFLTFQL (224 aa)) enclose the L-type lectin-like domain. A carbohydrate contacts are provided by serine 96 and aspartate 129. Ca(2+) is bound by residues aspartate 160, phenylalanine 162, aspartate 163, asparagine 164, aspartate 165, asparagine 169, and asparagine 170. A carbohydrate is bound at residue asparagine 164. Position 186 (histidine 186) interacts with a carbohydrate. Residue aspartate 189 participates in Ca(2+) binding. A disulfide bond links cysteine 198 and cysteine 238. An a carbohydrate-binding site is contributed by 259 to 261 (GGL). 2 disordered regions span residues 276 to 297 (TEPG…KEKY) and 377 to 396 (EISR…SQQE). Residues 278–297 (PGKEPPTPEKDISEKEKEKY) are compositionally biased toward basic and acidic residues. Residue serine 433 is modified to Phosphoserine. Residues 485 to 505 (TVHFVIFIVVQTVLFIGYIMY) traverse the membrane as a helical segment. Over 506–517 (RTQQEAAAKKFF) the chain is Cytoplasmic. A mediates interaction with RAB3GAP1, RAB3GAP2 and UBXN6 region spans residues 506–517 (RTQQEAAAKKFF). The short motif at 516 to 517 (FF) is the ER export motif element.

In terms of assembly, exists both as a covalent disulfide-linked homohexamer, and a complex of three disulfide-linked dimers non-covalently kept together. Interacts with MCFD2. May interact with TMEM115. Interacts with RAB3GAP1 and RAB3GAP2. Interacts with UBXN6. Interacts with SERPINA1/alpha1-antitrypsin. Interacts with BET1.

It localises to the endoplasmic reticulum-Golgi intermediate compartment membrane. Its subcellular location is the golgi apparatus membrane. It is found in the endoplasmic reticulum membrane. Mannose-specific lectin. May recognize sugar residues of glycoproteins, glycolipids, or glycosylphosphatidyl inositol anchors and may be involved in the sorting or recycling of proteins, lipids, or both. The LMAN1-MCFD2 complex forms a specific cargo receptor for the ER-to-Golgi transport of selected proteins. The sequence is that of Protein ERGIC-53 (Lman1) from Rattus norvegicus (Rat).